The sequence spans 185 residues: Large ribosomal subunit protein uL5 (185 aa).

This sequence belongs to the universal ribosomal protein uL5 family. In terms of assembly, part of the 50S ribosomal subunit; part of the 5S rRNA/L5/L18/L25 subcomplex. Contacts the 5S rRNA and the P site tRNA. Forms a bridge to the 30S subunit in the 70S ribosome.

In terms of biological role, this is one of the proteins that bind and probably mediate the attachment of the 5S RNA into the large ribosomal subunit, where it forms part of the central protuberance. In the 70S ribosome it contacts protein S13 of the 30S subunit (bridge B1b), connecting the 2 subunits; this bridge is implicated in subunit movement. Contacts the P site tRNA; the 5S rRNA and some of its associated proteins might help stabilize positioning of ribosome-bound tRNAs. This is Large ribosomal subunit protein uL5 from Phocaeicola vulgatus (strain ATCC 8482 / DSM 1447 / JCM 5826 / CCUG 4940 / NBRC 14291 / NCTC 11154) (Bacteroides vulgatus).